Consider the following 124-residue polypeptide: Fluoride-specific ion channel FluC 2 (124 aa).

A run of 3 helical transmembrane segments spans residues 36–56 (TFLI…YLAF), 66–86 (LFVM…SLDT), and 100–120 (LYAI…LALV). Na(+)-binding residues include glycine 74 and threonine 77.

This sequence belongs to the fluoride channel Fluc/FEX (TC 1.A.43) family.

It is found in the cell inner membrane. The catalysed reaction is fluoride(in) = fluoride(out). Na(+) is not transported, but it plays an essential structural role and its presence is essential for fluoride channel function. In terms of biological role, fluoride-specific ion channel. Important for reducing fluoride concentration in the cell, thus reducing its toxicity. This Nitrobacter hamburgensis (strain DSM 10229 / NCIMB 13809 / X14) protein is Fluoride-specific ion channel FluC 2.